The following is a 333-amino-acid chain: Fructose-1,6-bisphosphatase class 1 (333 aa).

The Mg(2+) site is built by Glu-92, Asp-113, Leu-115, and Asp-116. Residues 116-119 (DGSS), Asn-209, Tyr-242, and Lys-272 contribute to the substrate site. Glu-278 lines the Mg(2+) pocket.

The protein belongs to the FBPase class 1 family. As to quaternary structure, homotetramer. It depends on Mg(2+) as a cofactor.

It is found in the cytoplasm. The enzyme catalyses beta-D-fructose 1,6-bisphosphate + H2O = beta-D-fructose 6-phosphate + phosphate. The protein operates within carbohydrate biosynthesis; Calvin cycle. The chain is Fructose-1,6-bisphosphatase class 1 from Chlorobium phaeovibrioides (strain DSM 265 / 1930) (Prosthecochloris vibrioformis (strain DSM 265)).